A 1117-amino-acid polypeptide reads, in one-letter code: Cytospin-A (1117 aa).

Disordered regions lie at residues 1 to 176, 293 to 323, and 358 to 390; these read MKKA…NQIS, SLSPEITPGNQSDGGGTLTSSVEGSAPGSVE, and SSDDALDAPSSSESEGIPSIERSRKGSSGNASE. The span at 45–90 shows a compositional bias: low complexity; it reads TAASLSKTKSSDDLLAGMAGGVTVTNGVKGKKSTCPSAAPSASAPA. Residues 93–117 are compositionally biased toward polar residues; that stretch reads TVENKSKISTGTASSTKRSTSTGNK. Composition is skewed to basic and acidic residues over residues 120 to 131 and 158 to 171; these read SSTRERLRERTR and TATECDVRMSKSKS. Residues 168 to 280 are a coiled coil; it reads KSKSDNQISD…LNALGFSLEQ (113 aa). Over residues 293-303 the composition is skewed to polar residues; sequence SLSPEITPGNQ. Over residues 358 to 377 the composition is skewed to low complexity; the sequence is SSDDALDAPSSSESEGIPSI. 3 positions are modified to phosphoserine: Ser-384, Ser-385, and Ser-389. 2 coiled-coil regions span residues 394–449 and 487–807; these read ACLT…MESL and RYME…RGRV. Phosphoserine is present on residues Ser-868, Ser-881, and Ser-887. Positions 920 to 997 are disordered; that stretch reads TSSASRPASL…PTTRSRIREE (78 aa). Residues 946 to 956 show a composition bias toward basic and acidic residues; it reads RSSEEVKRDIS. Residues 971 to 990 are compositionally biased toward low complexity; the sequence is TTSPQLSLSSSPTASVTPTT. Residues 1011–1116 form the Calponin-homology (CH) domain; that stretch reads GSKRNALLKW…YVTAIYKYFE (106 aa).

The protein belongs to the cytospin-A family. In terms of assembly, may interact with both microtubules and actin cytoskeleton.

The protein resides in the cytoplasm. Its subcellular location is the cytoskeleton. It is found in the spindle. The protein localises to the cell junction. It localises to the gap junction. Its function is as follows. Involved in cytokinesis and spindle organization. May play a role in actin cytoskeleton organization and microtubule stabilization and hence required for proper cell adhesion and migration. This chain is Cytospin-A (SPECC1L), found in Homo sapiens (Human).